Reading from the N-terminus, the 355-residue chain is Phospho-N-acetylmuramoyl-pentapeptide-transferase (355 aa).

A run of 10 helical transmembrane segments spans residues 3–23 (GVLI…PWVI), 56–76 (VIIV…GIGF), 80–100 (GLLV…DDYI), 120–140 (AAVA…AGLL), 152–172 (TSLT…IAAT), 185–205 (LAAG…FWQF), 224–244 (PLDV…FLWW), 251–271 (IFMG…IAIV), 276–296 (LLLV…MIQV), and 330–350 (FWIV…AEFL).

The protein belongs to the glycosyltransferase 4 family. MraY subfamily. Requires Mg(2+) as cofactor.

The protein localises to the cell membrane. It catalyses the reaction UDP-N-acetyl-alpha-D-muramoyl-L-alanyl-gamma-D-glutamyl-meso-2,6-diaminopimeloyl-D-alanyl-D-alanine + di-trans,octa-cis-undecaprenyl phosphate = di-trans,octa-cis-undecaprenyl diphospho-N-acetyl-alpha-D-muramoyl-L-alanyl-D-glutamyl-meso-2,6-diaminopimeloyl-D-alanyl-D-alanine + UMP. It functions in the pathway cell wall biogenesis; peptidoglycan biosynthesis. In terms of biological role, catalyzes the initial step of the lipid cycle reactions in the biosynthesis of the cell wall peptidoglycan: transfers peptidoglycan precursor phospho-MurNAc-pentapeptide from UDP-MurNAc-pentapeptide onto the lipid carrier undecaprenyl phosphate, yielding undecaprenyl-pyrophosphoryl-MurNAc-pentapeptide, known as lipid I. The polypeptide is Phospho-N-acetylmuramoyl-pentapeptide-transferase (Frankia alni (strain DSM 45986 / CECT 9034 / ACN14a)).